The sequence spans 338 residues: DNA-directed RNA polymerase subunit alpha (338 aa).

Residues Met-1–Leu-230 are alpha N-terminal domain (alpha-NTD). The alpha C-terminal domain (alpha-CTD) stretch occupies residues Phe-247–Glu-338.

Belongs to the RNA polymerase alpha chain family. As to quaternary structure, homodimer. The RNAP catalytic core consists of 2 alpha, 1 beta, 1 beta' and 1 omega subunit. When a sigma factor is associated with the core the holoenzyme is formed, which can initiate transcription.

The enzyme catalyses RNA(n) + a ribonucleoside 5'-triphosphate = RNA(n+1) + diphosphate. Its function is as follows. DNA-dependent RNA polymerase catalyzes the transcription of DNA into RNA using the four ribonucleoside triphosphates as substrates. The polypeptide is DNA-directed RNA polymerase subunit alpha (Campylobacter concisus (strain 13826)).